Here is a 204-residue protein sequence, read N- to C-terminus: Large ribosomal subunit protein eL15 (204 aa).

The protein belongs to the eukaryotic ribosomal protein eL15 family. In terms of assembly, component of the large ribosomal subunit.

Its subcellular location is the cytoplasm. Component of the large ribosomal subunit. The ribosome is a large ribonucleoprotein complex responsible for the synthesis of proteins in the cell. In Megalobrama amblycephala (Chinese blunt snout bream), this protein is Large ribosomal subunit protein eL15 (rpl15).